Consider the following 425-residue polypeptide: MGEEANDDKKPTTKFELERETELRFEVEASQSVQLELLAGMAEIFGTELTRNKKFTFDAGAKVAVFTWHGCSLQLSGRTEVAYVSKDTPMLLYLNTHTALEQMRRQAEKEEERGPRVMVVGPTDVGKSTVCRLLLNYAVRLGRRPTYVELDVGQGSVSIPGTMGALYIERPADVEEGFSIQAPLVYHFGSTTPGTNIKLYNKITSRLADVFNQRCEVNRRASVSGCVINTCGWVKGSGYQALVHAASAFEVDVVVVLDQERLYNELKRDLPHFVRTVLLPKSGGVVERSKDFRRECRDERIREYFYGFRGCFYPHAFNVKFSDVKIYKVGAPTIPDSCLPLGMSQEDNQLKLVPVTPGRDMVHHLLSVSTAEGTEENLSETSVAGFIVVTSVDLEHQVFTVLSPAPRPLPKNFLLIMDIRFMDLK.

ATP contacts are provided by residues Glu22, Lys62, and 124–129 (DVGKST).

It belongs to the Clp1 family. Clp1 subfamily. Component of the tRNA splicing endonuclease complex, composed of CLP1, TSEN2, TSEN15, TSEN34 and TSEN54. Component of pre-mRNA cleavage complex II (CF-II). Also associates with numerous components of the pre-mRNA cleavage complex I (CF-I/CFIm), including NUDT21, CPSF2, CPSF3, CPSF6 and CPSF7. Interacts with CSTF2 and SYMPK. Requires Mg(2+) as cofactor. It depends on Mn(2+) as a cofactor. The cofactor is Ni(2+).

Its subcellular location is the nucleus. It carries out the reaction a 5'-end dephospho-2'-deoxyribonucleoside-DNA + ATP = a 5'-end 5'-phospho-2'-deoxyribonucleoside-DNA + ADP + H(+). It catalyses the reaction a 5'-end dephospho-ribonucleoside-RNA + ATP = a 5'-end 5'-phospho-ribonucleoside-RNA + ADP + H(+). In terms of biological role, polynucleotide kinase that can phosphorylate the 5'-hydroxyl groups of double-stranded RNA (dsRNA), single-stranded RNA (ssRNA), double-stranded DNA (dsDNA) and double-stranded DNA:RNA hybrids. dsRNA is phosphorylated more efficiently than dsDNA, and the RNA component of a DNA:RNA hybrid is phosphorylated more efficiently than the DNA component. Plays a key role in both tRNA splicing and mRNA 3'-end formation. Component of the tRNA splicing endonuclease complex: phosphorylates the 5'-terminus of the tRNA 3'-exon during tRNA splicing; this phosphorylation event is a prerequisite for the subsequent ligation of the two exon halves and the production of a mature tRNA. Its role in tRNA splicing and maturation is required for cerebellar development. Component of the pre-mRNA cleavage complex II (CF-II), which seems to be required for mRNA 3'-end formation. Also phosphorylates the 5'-terminus of exogenously introduced short interfering RNAs (siRNAs), which is a necessary prerequisite for their incorporation into the RNA-induced silencing complex (RISC). However, endogenous siRNAs and microRNAs (miRNAs) that are produced by the cleavage of dsRNA precursors by DICER1 already contain a 5'-phosphate group, so this protein may be dispensible for normal RNA-mediated gene silencing. This Bos taurus (Bovine) protein is Polyribonucleotide 5'-hydroxyl-kinase Clp1.